Reading from the N-terminus, the 150-residue chain is MSKYQKKSEAELKRTLTKLQFDVTQNAHTEPPYINEYNRNFEKGIYVDITSGEPLFISTDKFKSGCGWPAFSKPIDKNLIANYRDESHGMIRTEVRAKNSDSHLGHVFNDGPSELGGLRYCINSAALKFIPFEEMEKLGYKDYIHLFKNK.

Residues 9 to 132 (EAELKRTLTK…NSAALKFIPF (124 aa)) enclose the MsrB domain. Cys-121 functions as the Nucleophile in the catalytic mechanism.

It belongs to the MsrB Met sulfoxide reductase family.

The enzyme catalyses L-methionyl-[protein] + [thioredoxin]-disulfide + H2O = L-methionyl-(R)-S-oxide-[protein] + [thioredoxin]-dithiol. The sequence is that of Peptide methionine sulfoxide reductase MsrB from Mycoplasma genitalium (strain ATCC 33530 / DSM 19775 / NCTC 10195 / G37) (Mycoplasmoides genitalium).